A 256-amino-acid chain; its full sequence is Chitinase 11 (256 aa).

An N-terminal signal peptide occupies residues 1–22 (MRRLLPLAGATLLIAAAGGASG). 2 disulfides stabilise this stretch: Cys-48/Cys-109 and Cys-214/Cys-247. Glu-91 (proton donor) is an active-site residue.

Belongs to the glycosyl hydrolase 19 family. Chitinase class II subfamily. Expressed in leaves and at lower levels in roots, sheaths and meristems.

It carries out the reaction Random endo-hydrolysis of N-acetyl-beta-D-glucosaminide (1-&gt;4)-beta-linkages in chitin and chitodextrins.. The protein is Chitinase 11 (Cht11) of Oryza sativa subsp. japonica (Rice).